A 343-amino-acid polypeptide reads, in one-letter code: N-acetyl-gamma-glutamyl-phosphate reductase (343 aa).

Cysteine 147 is an active-site residue.

This sequence belongs to the NAGSA dehydrogenase family. Type 1 subfamily.

The protein localises to the cytoplasm. It carries out the reaction N-acetyl-L-glutamate 5-semialdehyde + phosphate + NADP(+) = N-acetyl-L-glutamyl 5-phosphate + NADPH + H(+). Its pathway is amino-acid biosynthesis; L-arginine biosynthesis; N(2)-acetyl-L-ornithine from L-glutamate: step 3/4. Catalyzes the NADPH-dependent reduction of N-acetyl-5-glutamyl phosphate to yield N-acetyl-L-glutamate 5-semialdehyde. This is N-acetyl-gamma-glutamyl-phosphate reductase from Staphylococcus aureus (strain Mu3 / ATCC 700698).